A 257-amino-acid chain; its full sequence is Protein YIPF5 (257 aa).

Over 1 to 124 (MSGFDNFNTD…KASDGSIMNE (124 aa)) the chain is Cytoplasmic. The chain crosses the membrane as a helical span at residues 125–145 (TDLAGPMVFCLAFGATLLLTG). Residue Lys146 is a topological domain, lumenal. Residues 147 to 167 (IQFGYVYGISAIGCLGMYCLL) form a helical membrane-spanning segment. The Cytoplasmic portion of the chain corresponds to 168-173 (NLMSMT). Residues 174-194 (GVSFGCVASVLGYCLLPMIIL) traverse the membrane as a helical segment. Residues 195–196 (SS) lie on the Lumenal side of the membrane. The helical transmembrane segment at 197 to 217 (FGVIFSLQGIMGIILTAAIIG) threads the bilayer. Residues 218–236 (WCSLSASKIFISALAMDGQ) are Cytoplasmic-facing. The chain crosses the membrane as a helical span at residues 237-257 (QLLVAYPCALLYGVFALISVF).

The protein belongs to the YIP1 family.

It is found in the endoplasmic reticulum membrane. It localises to the golgi apparatus. The protein localises to the cis-Golgi network membrane. Its function is as follows. Plays a role in transport between endoplasmic reticulum and Golgi. The chain is Protein YIPF5 (yipf5) from Danio rerio (Zebrafish).